A 305-amino-acid chain; its full sequence is Methionyl-tRNA formyltransferase (305 aa).

111–114 (SLLP) contacts (6S)-5,6,7,8-tetrahydrofolate.

Belongs to the Fmt family.

The catalysed reaction is L-methionyl-tRNA(fMet) + (6R)-10-formyltetrahydrofolate = N-formyl-L-methionyl-tRNA(fMet) + (6S)-5,6,7,8-tetrahydrofolate + H(+). Attaches a formyl group to the free amino group of methionyl-tRNA(fMet). The formyl group appears to play a dual role in the initiator identity of N-formylmethionyl-tRNA by promoting its recognition by IF2 and preventing the misappropriation of this tRNA by the elongation apparatus. The protein is Methionyl-tRNA formyltransferase of Campylobacter jejuni subsp. jejuni serotype O:6 (strain 81116 / NCTC 11828).